Reading from the N-terminus, the 968-residue chain is RNA polymerase-associated protein RapA (968 aa).

The Helicase ATP-binding domain maps to aspartate 164 to asparagine 334. Aspartate 177–threonine 184 is a binding site for ATP. The short motif at aspartate 280–histidine 283 is the DEAH box element. Positions arginine 490 to glycine 662 constitute a Helicase C-terminal domain.

It belongs to the SNF2/RAD54 helicase family. RapA subfamily. In terms of assembly, interacts with the RNAP. Has a higher affinity for the core RNAP than for the holoenzyme. Its ATPase activity is stimulated by binding to RNAP.

Transcription regulator that activates transcription by stimulating RNA polymerase (RNAP) recycling in case of stress conditions such as supercoiled DNA or high salt concentrations. Probably acts by releasing the RNAP, when it is trapped or immobilized on tightly supercoiled DNA. Does not activate transcription on linear DNA. Probably not involved in DNA repair. This chain is RNA polymerase-associated protein RapA, found in Escherichia coli O9:H4 (strain HS).